A 601-amino-acid chain; its full sequence is Invasin CotH3 (601 aa).

The first 17 residues, Met-1–Ala-17, serve as a signal peptide directing secretion. N-linked (GlcNAc...) asparagine glycans are attached at residues Asn-28, Asn-85, Asn-170, Asn-324, Asn-449, Asn-527, Asn-541, Asn-554, Asn-561, and Asn-571. Residues Ser-539–Ser-579 show a composition bias toward low complexity. The tract at residues Ser-539–Ala-581 is disordered. Ser-579 carries GPI-anchor amidated serine lipidation. A propeptide spans Gly-580–Phe-601 (removed in mature form).

As to quaternary structure, interacts with HSPA5/BiP on the cell surface of host nasal epithelial cells.

It is found in the cell membrane. In terms of biological role, promotes invasion of host epithelial cells by adhering to receptors on the host cell surface to facilitate endocytosis of the pathogen into host cells. Binds HSPA5/BiP protein on the cell surface of host nasal epithelial cells. The chain is Invasin CotH3 from Rhizopus delemar (strain RA 99-880 / ATCC MYA-4621 / FGSC 9543 / NRRL 43880) (Mucormycosis agent).